A 726-amino-acid polypeptide reads, in one-letter code: L-lysine 6-oxidase (726 aa).

Positions 516–581 (CTIQTVNFSE…LPPAYYSYWW (66 aa)) form a cross-link, 4'-cysteinyl-tryptophylquinone (Cys-Trp). W581 carries the post-translational modification Tryptophylquinone.

In terms of assembly, homotetramer. The cofactor is cysteine tryptophylquinone residue. Post-translationally, the cysteine tryptophylquinone (CTQ) is generated by oxidation of the indole ring of a tryptophan residue to form tryptophylquinone, followed by covalent cross-linking with a cysteine residue.

Its subcellular location is the secreted. It carries out the reaction L-lysine + O2 + H2O = (S)-2-amino-6-oxohexanoate + H2O2 + NH4(+). Inhibited by aminoguanidine, amiloride and beta-aminopropionitrile. Its function is as follows. Has antibacterial activity against a wide spectrum of Gram-positive and Gram-negative bacteria including nosocomial isolates of S.aureus and Pseudomonas sp. The antimicrobial activity is due to hydrogen peroxide generated by its lysine oxidase activity. Also has autotoxic activity. Involved in biofilm differentiation; responsible for cell death within microcolonies during biofilm development which is linked to the generation of a phenotypically diverse dispersal population and thus may play a role in colonization. In Marinomonas mediterranea (strain ATCC 700492 / JCM 21426 / NBRC 103028 / MMB-1), this protein is L-lysine 6-oxidase (lodA).